Reading from the N-terminus, the 122-residue chain is Ribosome-binding factor A (122 aa).

Belongs to the RbfA family. As to quaternary structure, monomer. Binds 30S ribosomal subunits, but not 50S ribosomal subunits or 70S ribosomes.

It is found in the cytoplasm. One of several proteins that assist in the late maturation steps of the functional core of the 30S ribosomal subunit. Associates with free 30S ribosomal subunits (but not with 30S subunits that are part of 70S ribosomes or polysomes). Required for efficient processing of 16S rRNA. May interact with the 5'-terminal helix region of 16S rRNA. This Burkholderia mallei (strain NCTC 10229) protein is Ribosome-binding factor A.